The chain runs to 243 residues: Small ribosomal subunit protein uS3 (243 aa).

One can recognise a KH type-2 domain in the interval 38–106 (IRKYLNARLA…DIQINIFEVK (69 aa)). Residues 214 to 243 (PNFTQSKESGRGNNGGNNGGKNFKRKKNNR) are disordered.

This sequence belongs to the universal ribosomal protein uS3 family. As to quaternary structure, part of the 30S ribosomal subunit. Forms a tight complex with proteins S10 and S14.

Binds the lower part of the 30S subunit head. Binds mRNA in the 70S ribosome, positioning it for translation. The polypeptide is Small ribosomal subunit protein uS3 (Bacteroides thetaiotaomicron (strain ATCC 29148 / DSM 2079 / JCM 5827 / CCUG 10774 / NCTC 10582 / VPI-5482 / E50)).